The sequence spans 317 residues: Homoserine kinase (317 aa).

95-105 (PHSRGLGSSAA) is an ATP binding site.

It belongs to the GHMP kinase family. Homoserine kinase subfamily.

Its subcellular location is the cytoplasm. It catalyses the reaction L-homoserine + ATP = O-phospho-L-homoserine + ADP + H(+). It participates in amino-acid biosynthesis; L-threonine biosynthesis; L-threonine from L-aspartate: step 4/5. Functionally, catalyzes the ATP-dependent phosphorylation of L-homoserine to L-homoserine phosphate. The chain is Homoserine kinase from Mycolicibacterium smegmatis (strain ATCC 700084 / mc(2)155) (Mycobacterium smegmatis).